The chain runs to 88 residues: Small ribosomal subunit protein uS17 (88 aa).

This sequence belongs to the universal ribosomal protein uS17 family. In terms of assembly, part of the 30S ribosomal subunit.

In terms of biological role, one of the primary rRNA binding proteins, it binds specifically to the 5'-end of 16S ribosomal RNA. The polypeptide is Small ribosomal subunit protein uS17 (Prochlorococcus marinus (strain MIT 9215)).